The sequence spans 611 residues: Elongation factor 4 1 (611 aa).

One can recognise a tr-type G domain in the interval 11-193; sequence QHIRNFSIVA…QIVHKIPAPQ (183 aa). Residues 23–28 and 140–143 each bind GTP; these read DHGKST and NKID.

It belongs to the TRAFAC class translation factor GTPase superfamily. Classic translation factor GTPase family. LepA subfamily.

The protein resides in the cell membrane. The catalysed reaction is GTP + H2O = GDP + phosphate + H(+). Its function is as follows. Required for accurate and efficient protein synthesis under certain stress conditions. May act as a fidelity factor of the translation reaction, by catalyzing a one-codon backward translocation of tRNAs on improperly translocated ribosomes. Back-translocation proceeds from a post-translocation (POST) complex to a pre-translocation (PRE) complex, thus giving elongation factor G a second chance to translocate the tRNAs correctly. Binds to ribosomes in a GTP-dependent manner. The protein is Elongation factor 4 1 of Lactiplantibacillus plantarum (strain ATCC BAA-793 / NCIMB 8826 / WCFS1) (Lactobacillus plantarum).